Reading from the N-terminus, the 140-residue chain is Cysteine desulfuration protein SufE (140 aa).

Cysteine 51 (cysteine persulfide intermediate) is an active-site residue.

It belongs to the SufE family. As to quaternary structure, homodimer. Interacts with SufS.

The protein localises to the cytoplasm. Its pathway is cofactor biosynthesis; iron-sulfur cluster biosynthesis. Functionally, participates in cysteine desulfuration mediated by SufS. Cysteine desulfuration mobilizes sulfur from L-cysteine to yield L-alanine and constitutes an essential step in sulfur metabolism for biosynthesis of a variety of sulfur-containing biomolecules. Functions as a sulfur acceptor for SufS, by mediating the direct transfer of the sulfur atom from the S-sulfanylcysteine of SufS, an intermediate product of cysteine desulfuration process. This is Cysteine desulfuration protein SufE from Yersinia enterocolitica serotype O:8 / biotype 1B (strain NCTC 13174 / 8081).